A 192-amino-acid chain; its full sequence is Molybdenum cofactor cytidylyltransferase (192 aa).

D101 is a binding site for Mg(2+).

In terms of assembly, monomer. Interacts with the Moco-binding chaperone PaoD. It depends on Mg(2+) as a cofactor. Mn(2+) serves as cofactor.

It carries out the reaction Mo-molybdopterin + CTP + H(+) = Mo-molybdopterin cytosine dinucleotide + diphosphate. Transfers a CMP moiety from CTP to Mo-molybdopterin (Mo-MPT) cofactor (Moco or molybdenum cofactor) to form Mo-molybdopterin cytosine dinucleotide (Mo-MCD) cofactor. Is specific for CTP; other nucleotides such as ATP and GTP cannot be utilized. Is also able to convert MPT to MCD in the absence of molybdate, however, with only one catalytic turnover. In Escherichia coli (strain K12), this protein is Molybdenum cofactor cytidylyltransferase (mocA).